A 114-amino-acid polypeptide reads, in one-letter code: Superoxide dismutase [Cu-Zn] (114 aa).

Cu cation-binding residues include H37, H39, and H54. The tract at residues 48–68 (CMSSGPHFNPRNKEHGAPTDE) is disordered. Positions 54, 62, 71, and 74 each coordinate Zn(2+). Residues 58–68 (RNKEHGAPTDE) are compositionally biased toward basic and acidic residues. Position 111 (H111) interacts with Cu cation.

The protein belongs to the Cu-Zn superoxide dismutase family. In terms of assembly, homodimer. Cu cation serves as cofactor. The cofactor is Zn(2+).

The protein resides in the cytoplasm. It catalyses the reaction 2 superoxide + 2 H(+) = H2O2 + O2. Functionally, destroys radicals which are normally produced within the cells and which are toxic to biological systems. This Drosophila miranda (Fruit fly) protein is Superoxide dismutase [Cu-Zn].